We begin with the raw amino-acid sequence, 194 residues long: Mersacidin decarboxylase (194 aa).

The active site involves histidine 75.

The protein belongs to the HFCD (homooligomeric flavin containing Cys decarboxylase) superfamily. Homododecamer. Requires FAD as cofactor.

It participates in antibiotic biosynthesis; mersacidin biosynthesis. In terms of biological role, catalyzes the oxidative decarboxylation of the C-terminal cysteine residue of mersacidin to an aminoenethiol residue. In Bacillus sp. (strain HIL-Y85/54728), this protein is Mersacidin decarboxylase (mrsD).